The sequence spans 96 residues: MNVPTAPTPNKHLNIPDLRFEKVFKKALHRELAPSSSLSRKAGVITKVVVRDVLLMPLLQSFVLSLALMGVKEWLSYIRLKGRTLGDRIRQRLFPI.

The helical transmembrane segment at 53-71 (VLLMPLLQSFVLSLALMGV) threads the bilayer.

The protein resides in the membrane. This is an uncharacterized protein from Saccharomyces cerevisiae (strain ATCC 204508 / S288c) (Baker's yeast).